The following is a 47-amino-acid chain: Capistruin (47 aa).

Residues methionine 1–histidine 28 constitute a propeptide that is removed on maturation. The isoaspartyl glycine isopeptide (Gly-Asp) cross-link spans glycine 29 to aspartate 37.

In terms of processing, it is assumed that the two processing enzymes CapB/CapC convert the precursor protein CapA into the mature lasso peptide capistruin. CapB is assumed to cleave the precursor protein CapA and to set an N-terminal Gly free, whose a-NH2 group acts as the nucleophile in the subsequent cyclization reaction. CapC is most likely involved in the side-chain carboxyl group activation of aspartic acid at position 9 generating the electrophile for the condensation reaction. CapD may export capistruin outside of the producing cells.

The protein resides in the secreted. Functionally, peptide antibiotic that functions through inhibition of the bacterial DNA-dependent RNA polymerase (RNAP). Inhibits transcription by binding in RNAP secondary channel, where it sterically blocks the folding of the trigger loop, which is essential for efficient catalysis. In contrast to MccJ25, does not restrict access of nucleotide substrates to the catalytic center and shows a non-competitive mode of inhibition. Shows activity against closely related Gram-negative Burkholderia and Pseudomonas strains. Is not active against Gram-positive bacteria. In Burkholderia thailandensis (strain ATCC 700388 / DSM 13276 / CCUG 48851 / CIP 106301 / E264), this protein is Capistruin.